Consider the following 828-residue polypeptide: Periplasmic nitrate reductase (828 aa).

A signal peptide (tat-type signal) is located at residues 1 to 31 (MKLSRRGFMKANAVAAAAAAAGLSVPGVARA). One can recognise a 4Fe-4S Mo/W bis-MGD-type domain in the interval 39-95 (IKWDKAPCRFCGTGCGVLVGTQQGRVVACQGDPDAPVNRGLNCIKGYFLPKIMYGED). Positions 46, 49, 53, and 81 each coordinate [4Fe-4S] cluster. Mo-bis(molybdopterin guanine dinucleotide) contacts are provided by residues K83, Q150, N175, C179, 212 to 219 (WGANMAEM), 243 to 247 (STYQH), 262 to 264 (QSD), M372, Q376, N482, 508 to 509 (SD), K531, D558, and 718 to 727 (TGRVLEHWHT). A substrate-binding site is contributed by F794. 2 residues coordinate Mo-bis(molybdopterin guanine dinucleotide): N802 and K819.

Belongs to the prokaryotic molybdopterin-containing oxidoreductase family. NasA/NapA/NarB subfamily. As to quaternary structure, component of the periplasmic nitrate reductase NapAB complex composed of NapA and NapB. The cofactor is [4Fe-4S] cluster. Requires Mo-bis(molybdopterin guanine dinucleotide) as cofactor. In terms of processing, predicted to be exported by the Tat system. The position of the signal peptide cleavage has not been experimentally proven.

Its subcellular location is the periplasm. It carries out the reaction 2 Fe(II)-[cytochrome] + nitrate + 2 H(+) = 2 Fe(III)-[cytochrome] + nitrite + H2O. Catalytic subunit of the periplasmic nitrate reductase complex NapAB. Receives electrons from NapB and catalyzes the reduction of nitrate to nitrite. This Shigella dysenteriae serotype 1 (strain Sd197) protein is Periplasmic nitrate reductase.